Here is a 95-residue protein sequence, read N- to C-terminus: Putative defensin-like protein 262 (95 aa).

The first 26 residues, 1-26 (MEKTSLKLIFLFSLTVIAFCSSLGDA), serve as a signal peptide directing secretion. 4 disulfide bridges follow: Cys-48–Cys-95, Cys-64–Cys-83, Cys-70–Cys-91, and Cys-74–Cys-93.

It belongs to the DEFL family.

The protein resides in the secreted. The protein is Putative defensin-like protein 262 of Arabidopsis thaliana (Mouse-ear cress).